Consider the following 396-residue polypeptide: Alpha-1-antitrypsin (396 aa).

The signal sequence occupies residues 1–2 (HV). The disordered stretch occupies residues 1–24 (HVEDPQGDAAQKTDTSHHDQEHST). Basic and acidic residues predominate over residues 14–24 (DTSHHDQEHST). Ser16 carries the post-translational modification Phosphoserine. Asn48, Asn85, Asn123, and Asn249 each carry an N-linked (GlcNAc...) asparagine glycan. Residues 351-370 (GAMFLEAIPMSIPPEVKFNK) are RCL. Ser361 carries the phosphoserine modification.

It belongs to the serpin family. Interacts with CELA2A. Interacts with ERGIC3 and LMAN1/ERGIC53. Interacts with PRSS1/Trypsin. Plasma.

Its subcellular location is the secreted. Functionally, inhibitor of serine proteases. Its primary target is elastase, but it also has a moderate affinity for plasmin and thrombin. Inhibits trypsin, chymotrypsin and plasminogen activator. The protein is Alpha-1-antitrypsin (SERPINA1) of Chlorocebus aethiops (Green monkey).